A 1004-amino-acid chain; its full sequence is Glutamate [NMDA] receptor subunit 1 (1004 aa).

The signal sequence occupies residues Met1–Ala39. Over Gln40–Ser585 the chain is Extracellular. N-linked (GlcNAc...) asparagine glycosylation is found at Asn270, Asn326, Asn357, Asn409, Asn466, Asn493, and Asn513. Residues Pro542–Thr544 and Arg549 contribute to the glycine site. A helical transmembrane segment spans residues Asn586–Leu606. At Asp607–Trp663 the chain is on the cytoplasmic side. A helical transmembrane segment spans residues Ala664–Leu684. At Glu685–Asn843 the chain is on the extracellular side. N-linked (GlcNAc...) asparagine glycosylation occurs at Asn705. Residues Ser715 and Asp759 each contribute to the glycine site. Residues Met844–Ile864 traverse the membrane as a helical segment. Residues Glu865 to Val1004 lie on the Cytoplasmic side of the membrane. The segment at Thr980–Val1004 is disordered. Over residues Gly994–Val1004 the composition is skewed to polar residues.

Belongs to the glutamate-gated ion channel (TC 1.A.10.1) family. Forms a heteromeric NMDA channel with Nmdar2.

It is found in the cell membrane. Its subcellular location is the postsynaptic cell membrane. The protein resides in the postsynaptic density. In terms of biological role, NMDA receptor subtype of glutamate-gated ion channels with high calcium permeability and voltage-dependent sensitivity to magnesium. Mediated by glycine. This protein plays a key role in synaptic plasticity, synaptogenesis, excitotoxicity, memory acquisition and learning. It mediates neuronal functions in glutamate neurotransmission. Is involved in the cell surface targeting of NMDA receptors. Plays a role in associative learning and in long-term memory consolidation. The chain is Glutamate [NMDA] receptor subunit 1 from Drosophila persimilis (Fruit fly).